The primary structure comprises 177 residues: Probable DNA-directed RNA polymerase subunit delta (177 aa).

The region spanning 14-81 (CSMIEVVHSV…GENRWGLRSW (68 aa)) is the HTH HARE-type domain. Residues 90–177 (EILPQPKPKK…ETEEEEEEEL (88 aa)) form a disordered region. The segment covering 106 to 177 (DGFDDYIEED…ETEEEEEEEL (72 aa)) has biased composition (acidic residues).

Belongs to the RpoE family. RNAP is composed of a core of 2 alpha, a beta and a beta' subunits. The core is associated with a delta subunit and one of several sigma factors.

Participates in both the initiation and recycling phases of transcription. In the presence of the delta subunit, RNAP displays an increased specificity of transcription, a decreased affinity for nucleic acids, and an increased efficiency of RNA synthesis because of enhanced recycling. The polypeptide is Probable DNA-directed RNA polymerase subunit delta (Bacillus cereus (strain B4264)).